A 124-amino-acid polypeptide reads, in one-letter code: MIYGIGVDVTDLARIQAAQEKNSGFAVKILTPTELANYQQLDGRRAVEYLSGRFSAKESYSKAFGTGLGKVALQDVEILNNELGKPILTKHPFSGQAFVSISHSETLVFTEVILEKEGPERDDR.

Residues Asp-8 and Glu-58 each coordinate Mg(2+).

The protein belongs to the P-Pant transferase superfamily. AcpS family. Requires Mg(2+) as cofactor.

The protein resides in the cytoplasm. The enzyme catalyses apo-[ACP] + CoA = holo-[ACP] + adenosine 3',5'-bisphosphate + H(+). Transfers the 4'-phosphopantetheine moiety from coenzyme A to a Ser of acyl-carrier-protein. The protein is Holo-[acyl-carrier-protein] synthase of Lacticaseibacillus casei (strain BL23) (Lactobacillus casei).